A 504-amino-acid polypeptide reads, in one-letter code: Anaerobic nitric oxide reductase transcription regulator NorR (504 aa).

D57 is modified (4-aspartylphosphate). Residues 187-416 (MIGLSPGMTQ…LEHAIHRAVV (230 aa)) form the Sigma-54 factor interaction domain. ATP contacts are provided by residues 215–222 (GETGTGKE) and 278–287 (ADNGTLFLDE). A DNA-binding region (H-T-H motif) is located at residues 479–498 (WAACARMLETDVANLHRLAK).

Its pathway is nitrogen metabolism; nitric oxide reduction. In terms of biological role, required for the expression of anaerobic nitric oxide (NO) reductase, acts as a transcriptional activator for at least the norVW operon. Activation also requires sigma-54. The protein is Anaerobic nitric oxide reductase transcription regulator NorR of Escherichia coli O157:H7.